A 231-amino-acid chain; its full sequence is Lipid A acyltransferase PagP (231 aa).

Residues 1–23 (MNKLTVRNFIVGLLIVFSLNSFS) form the signal peptide. Positions 24-43 (SPPSISNSSSNSIDENSPIN) are enriched in low complexity. The disordered stretch occupies residues 24-59 (SPPSISNSSSNSIDENSPINTFKISPDNQTSKKSDL). Active-site residues include histidine 100, aspartate 145, and serine 146.

It belongs to the lipid A palmitoyltransferase family. In terms of assembly, homodimer.

The protein localises to the cell outer membrane. It catalyses the reaction a lipid A + a 1,2-diacyl-sn-glycero-3-phosphocholine = a hepta-acyl lipid A + a 2-acyl-sn-glycero-3-phosphocholine. It carries out the reaction a lipid IVA + a 1,2-diacyl-sn-glycero-3-phosphocholine = a lipid IVB + a 2-acyl-sn-glycero-3-phosphocholine. The enzyme catalyses a lipid IIA + a 1,2-diacyl-sn-glycero-3-phosphocholine = a lipid IIB + a 2-acyl-sn-glycero-3-phosphocholine. Transfers a fatty acid residue from the sn-1 position of a phospholipid to the N-linked hydroxyfatty acid chain on the proximal unit of lipid A or its precursors. The sequence is that of Lipid A acyltransferase PagP from Legionella longbeachae serogroup 1 (strain NSW150).